The following is a 1381-amino-acid chain: Peroxisomal ATPase PEX6 (1381 aa).

The span at 1 to 10 (MTAPNSTPAS) shows a compositional bias: polar residues. 4 disordered regions span residues 1–23 (MTAP…QDKP), 247–315 (VRTS…DNLS), 333–374 (TVTG…DRPR), and 467–499 (YSSR…NPPA). Residues 11-20 (SRKRVRRRRQ) show a composition bias toward basic residues. Composition is skewed to acidic residues over residues 270-284 (AEDD…AEED) and 296-315 (TDAD…DNLS). Polar residues-rich tracts occupy residues 333 to 345 (TVTG…TGTP), 355 to 367 (GPGS…TATT), and 487 to 499 (FFEA…NPPA). An ATP-binding site is contributed by 1031–1038 (GPPGTGKT). 2 stretches are compositionally biased toward basic and acidic residues: residues 1294–1305 (GAKDKDKKKEGA) and 1337–1350 (STKK…KAAD). The interval 1294–1381 (GAKDKDKKKE…GGDEDEGLYD (88 aa)) is disordered. Residues 1372-1381 (GGDEDEGLYD) show a composition bias toward acidic residues.

Belongs to the AAA ATPase family. In terms of assembly, interacts with PEX1; forming the PEX1-PEX6 AAA ATPase complex, which is composed of a heterohexamer formed by a trimer of PEX1-PEX6 dimers.

The protein localises to the cytoplasm. It localises to the cytosol. Its subcellular location is the peroxisome membrane. The enzyme catalyses ATP + H2O = ADP + phosphate + H(+). Component of the PEX1-PEX6 AAA ATPase complex, a protein dislocase complex that mediates the ATP-dependent extraction of the PEX5 receptor from peroxisomal membranes, an essential step for PEX5 recycling. Specifically recognizes PEX5 monoubiquitinated at 'Cys-6', and pulls it out of the peroxisome lumen through the PEX2-PEX10-PEX12 retrotranslocation channel. Extraction by the PEX1-PEX6 AAA ATPase complex is accompanied by unfolding of the TPR repeats and release of bound cargo from PEX5. This chain is Peroxisomal ATPase PEX6 (pex-6), found in Neurospora crassa (strain ATCC 24698 / 74-OR23-1A / CBS 708.71 / DSM 1257 / FGSC 987).